Consider the following 1057-residue polypeptide: Carbamoyl phosphate synthase large chain (1057 aa).

Residues 1–401 (MPKRDDIQTI…SLLKAIRSLE (401 aa)) are carboxyphosphate synthetic domain. The ATP site is built by Arg-129, Arg-169, Gly-175, Gly-176, Lys-208, Ile-210, Glu-215, Gly-241, Ile-242, His-243, Gln-284, and Glu-298. Residues 133 to 327 (RSLMNDLNVP…IAKLAAKIAV (195 aa)) enclose the ATP-grasp 1 domain. Residues Gln-284, Glu-298, and Asn-300 each coordinate Mg(2+). Residues Gln-284, Glu-298, and Asn-300 each contribute to the Mn(2+) site. The oligomerization domain stretch occupies residues 402–546 (YGVHHLGLPN…YGTYETENES (145 aa)). The interval 547–929 (IVTDKEKILV…ALYKGLTGSG (383 aa)) is carbamoyl phosphate synthetic domain. The ATP-grasp 2 domain maps to 671-861 (EALLHTIDVP…MAQLAMQAIM (191 aa)). Arg-707, Arg-746, Leu-748, Glu-752, Gly-777, Val-778, His-779, Ser-780, Gln-820, and Glu-832 together coordinate ATP. Mg(2+) contacts are provided by Gln-820, Glu-832, and Asn-834. Mn(2+) is bound by residues Gln-820, Glu-832, and Asn-834. The 128-residue stretch at 930–1057 (VEVKDHGTVL…ESMTFSMRTM (128 aa)) folds into the MGS-like domain. An allosteric domain region spans residues 930 to 1057 (VEVKDHGTVL…ESMTFSMRTM (128 aa)).

It belongs to the CarB family. In terms of assembly, composed of two chains; the small (or glutamine) chain promotes the hydrolysis of glutamine to ammonia, which is used by the large (or ammonia) chain to synthesize carbamoyl phosphate. Tetramer of heterodimers (alpha,beta)4. The cofactor is Mg(2+). Mn(2+) serves as cofactor.

The catalysed reaction is hydrogencarbonate + L-glutamine + 2 ATP + H2O = carbamoyl phosphate + L-glutamate + 2 ADP + phosphate + 2 H(+). The enzyme catalyses hydrogencarbonate + NH4(+) + 2 ATP = carbamoyl phosphate + 2 ADP + phosphate + 2 H(+). It participates in amino-acid biosynthesis; L-arginine biosynthesis; carbamoyl phosphate from bicarbonate: step 1/1. The protein operates within pyrimidine metabolism; UMP biosynthesis via de novo pathway; (S)-dihydroorotate from bicarbonate: step 1/3. In terms of biological role, large subunit of the glutamine-dependent carbamoyl phosphate synthetase (CPSase). CPSase catalyzes the formation of carbamoyl phosphate from the ammonia moiety of glutamine, carbonate, and phosphate donated by ATP, constituting the first step of 2 biosynthetic pathways, one leading to arginine and/or urea and the other to pyrimidine nucleotides. The large subunit (synthetase) binds the substrates ammonia (free or transferred from glutamine from the small subunit), hydrogencarbonate and ATP and carries out an ATP-coupled ligase reaction, activating hydrogencarbonate by forming carboxy phosphate which reacts with ammonia to form carbamoyl phosphate. The polypeptide is Carbamoyl phosphate synthase large chain (Staphylococcus haemolyticus (strain JCSC1435)).